Consider the following 292-residue polypeptide: MSNLTFFFDQLLSYSYLQQALTAAILVGIICGVIGCFIILRGMALMGDAISHAVLPGVVIAYMIGASFFIGAVITGVITALAIGYVSQNSRVKEDSAIGILFTAAFALGIVLITGMRGTGVDLWHILFGNVLAVSRTDLWVTLGIGLFVLLIIILFYRPLLLSTFDPVMAQATGIPVQMIHYLLMLLLSLVTVAALQTVGIVLVVAMLITPGATAYLLTNRLPVMLCLAAMFGVISAIAGIYFSVIYDVASGASIVLVASTLFALAFFFSPKQGVLTRYWRGKRAKEMSATS.

Helical transmembrane passes span 20 to 40, 58 to 78, 96 to 116, 137 to 157, 168 to 188, 190 to 210, 226 to 246, and 249 to 269; these read ALTA…FIIL, VVIA…TGVI, SAIG…ITGM, TDLW…ILFY, VMAQ…MLLL, LVTV…MLIT, LCLA…FSVI, and VASG…AFFF.

The protein belongs to the ABC-3 integral membrane protein family.

The protein localises to the cell membrane. Its function is as follows. This protein is probably a component of a manganese permease, a binding protein-dependent, ATP-driven transport system. In Halalkalibacterium halodurans (strain ATCC BAA-125 / DSM 18197 / FERM 7344 / JCM 9153 / C-125) (Bacillus halodurans), this protein is Manganese transport system membrane protein MntC (mntC).